The chain runs to 53 residues: uncharacterized protein (53 aa).

The protein localises to the mitochondrion matrix. Its subcellular location is the kinetoplast. This is an uncharacterized protein from Trypanosoma brucei brucei.